Consider the following 452-residue polypeptide: Major royal jelly protein 2 (452 aa).

The first 17 residues, 1–17 (MTRWLFMVACLGIACQG), serve as a signal peptide directing secretion. N-linked (GlcNAc...) asparagine glycans are attached at residues Asn145 and Asn178. Residues 416–452 (NNNQNDNIQNTNNQNDNNQKNNKKNANNQKNNNQNDN) are disordered.

Post-translationally, N-linked core structure contains mannose (which consists of 8-alpha-mannosyl residues, one beta-mannosyl residue, and chitobiose). In terms of tissue distribution, secreted from the hypopharyngeal glands of the worker honey bee (at protein level); expression peaks at 12 days post eclosion. Expressed in the brains of adult worker bees peaking at 12 days post eclosion (at protein level). Expressed in the spermatheca of adult queen bees (at protein level); Expression levels are higher in mated queens than in virgin queens.

It is found in the secreted. Its function is as follows. Highly abundant protein component of royal jelly, a substance produced in the hypopharyngeal gland containing proteins, free amino acids, fatty acids, sugars and other nutrients, which is fed to developing larvae by worker nurse bees. Major royal jelly proteins (MRJPs) are high in essential amino acids and probably have a nutritional function in larval food. All larvae are fed some royal jelly (also known as worker jelly) early in their development but it forms the principal source of nutrition for larvae destined to become queen bees. Produced in the spermatheca of adult queen bees, along with other major royal jelly proteins, where it may act as a nutrient supply for sperm stored by mated queens, or be involved in energy metabolism. The sequence is that of Major royal jelly protein 2 from Apis mellifera (Honeybee).